The chain runs to 94 residues: Preprofallaxidin-9 (94 aa).

Residues Met1–Cys22 form the signal peptide. Positions Glu23 to Arg46 are excised as a propeptide. Residues Arg27–Arg46 form a disordered region. A compositionally biased stretch (acidic residues) spans Glu30–Ser42. A Leucine amide modification is found at Leu62. Positions Ser66 to Arg70 are excised as a propeptide. Met75 bears the Methionine amide mark. The propeptide occupies Ser79–Arg83. Position 88 is a methionine amide (Met88). A propeptide spanning residues Ser92–Glu94 is cleaved from the precursor.

This sequence belongs to the frog skin active peptide (FSAP) family. Brevinin subfamily. As to expression, expressed by the skin glands.

It localises to the secreted. In terms of biological role, fallaxidin-1.3 shows no antibacterial activity against Gram-positive or Gram-negative bacteria. Does not inhibit the formation of NO by neuronal nitric oxide synthase. Has no effect on splenocyte proliferation or smooth muscle contraction. Its function is as follows. Fallaxidin-3.2 shows antibacterial activity against the Gram-positive bacteria E.faecalis (MIC=100 uM) and L.lactis (MIC=500 uM). No antibacterial activity against the Gram-positive bacteria B.cereus, L.innocua, M.luteus, S.epidermidis, S.uberis and S.aureus, or the Gram-negative bacteria E.cloacae and E.coli. The polypeptide is Preprofallaxidin-9 (Litoria fallax (Eastern dwarf tree frog)).